Here is a 289-residue protein sequence, read N- to C-terminus: Protease HtpX (289 aa).

Transmembrane regions (helical) follow at residues Leu-7–Phe-27 and Gly-38–Met-58. His-144 serves as a coordination point for Zn(2+). Residue Glu-145 is part of the active site. His-148 lines the Zn(2+) pocket. Helical transmembrane passes span Val-155–Ile-175 and Leu-194–Ile-214. Glu-223 serves as a coordination point for Zn(2+).

This sequence belongs to the peptidase M48B family. It depends on Zn(2+) as a cofactor.

It is found in the cell inner membrane. The polypeptide is Protease HtpX (Actinobacillus pleuropneumoniae serotype 5b (strain L20)).